We begin with the raw amino-acid sequence, 245 residues long: 1-(5-phosphoribosyl)-5-[(5-phosphoribosylamino)methylideneamino] imidazole-4-carboxamide isomerase (245 aa).

Asp7 (proton acceptor) is an active-site residue. The active-site Proton donor is the Asp129.

Belongs to the HisA/HisF family.

The protein resides in the cytoplasm. The enzyme catalyses 1-(5-phospho-beta-D-ribosyl)-5-[(5-phospho-beta-D-ribosylamino)methylideneamino]imidazole-4-carboxamide = 5-[(5-phospho-1-deoxy-D-ribulos-1-ylimino)methylamino]-1-(5-phospho-beta-D-ribosyl)imidazole-4-carboxamide. It functions in the pathway amino-acid biosynthesis; L-histidine biosynthesis; L-histidine from 5-phospho-alpha-D-ribose 1-diphosphate: step 4/9. The polypeptide is 1-(5-phosphoribosyl)-5-[(5-phosphoribosylamino)methylideneamino] imidazole-4-carboxamide isomerase (Serratia proteamaculans (strain 568)).